The primary structure comprises 121 residues: Small ribosomal subunit protein uS11 (121 aa).

Belongs to the universal ribosomal protein uS11 family. Part of the 30S ribosomal subunit. Interacts with proteins S7 and S18. Binds to IF-3.

In terms of biological role, located on the platform of the 30S subunit, it bridges several disparate RNA helices of the 16S rRNA. Forms part of the Shine-Dalgarno cleft in the 70S ribosome. This chain is Small ribosomal subunit protein uS11, found in Mycoplasmoides gallisepticum (strain R(low / passage 15 / clone 2)) (Mycoplasma gallisepticum).